We begin with the raw amino-acid sequence, 397 residues long: Subtilisin-like protease 3 (397 aa).

The signal sequence occupies residues 1–19; it reads MGCIKVISVFLAAIAAVDA. The propeptide occupies 20–116; sequence RAFFHNRGGS…VEHDRVVKLA (97 aa). Residues 35 to 116 form the Inhibitor I9 domain; that stretch reads SYIVVMKDGV…VEHDRVVKLA (82 aa). The Peptidase S8 domain occupies 126–397; sequence TWGLGRVSHR…NRLLYNGSGQ (272 aa). Catalysis depends on charge relay system residues D158 and H189. N-linked (GlcNAc...) asparagine glycosylation is present at N250. S344 acts as the Charge relay system in catalysis. N393 carries an N-linked (GlcNAc...) asparagine glycan.

Belongs to the peptidase S8 family.

Its subcellular location is the secreted. In terms of biological role, secreted subtilisin-like serine protease with keratinolytic activity that contributes to pathogenicity. In Trichophyton equinum (Horse ringworm fungus), this protein is Subtilisin-like protease 3 (SUB3).